We begin with the raw amino-acid sequence, 79 residues long: MASLMEVRDMLALQGRMEAKQLSARLQTPQPLIDAMLERMEAMGKVVRISETSEGCLSGSCKSCPEGKAACRQEWWALR.

Iron-sulfur cluster contacts are provided by Cys56, Cys61, Cys64, and Cys71.

This sequence belongs to the FeoC family.

In terms of biological role, may function as a transcriptional regulator that controls feoABC expression. In Klebsiella pneumoniae subsp. pneumoniae (strain ATCC 700721 / MGH 78578), this protein is Probable [Fe-S]-dependent transcriptional repressor.